We begin with the raw amino-acid sequence, 517 residues long: MEGPVLTLGLLAALAVCGSWGLNEEERLIRHLFQEKGYNKELRPVAHKEESVDVALALTLSNLISLKEVEETLTTNVWIEHGWTDNRLKWNAEEFGNISVLRLPPDMVWLPEIVLENNNDGSFQISYSCNVLVYHYGFVYWLPPAIFRSSCPISVTYFPFDWQNCSLKFSSLKYTAKEITLSLKQDAKENRTYPVEWIIIDPEGFTENGEWEIVHRPARVNVDPRAPLDSPSRQDITFYLIIRRKPLFYIINILVPCVLISFMVNLVFYLPADSGEKTSVAISVLLAQSVFLLLISKRLPATSMAIPLIGKFLLFGMVLVTMVVVICVIVLNIHFRTPSTHVLSEGVKKLFLETLPELLHMSRPAEDGPSPGALVRRSSSLGYISKAEEYFLLKSRSDLMFEKQSERHGLARRLTTARRPPASSEQAQQELFNELKPAVDGANFIVNHMRDQNNYNEEKDSWNRVARTVDRLCLFVVTPVMVVGTAWIFLQGVYNQPPPQPFPGDPYSYNVQDKRFI.

A signal peptide spans 1 to 21; the sequence is MEGPVLTLGLLAALAVCGSWG. The Extracellular segment spans residues 22–245; sequence LNEEERLIRH…ITFYLIIRRK (224 aa). Residues asparagine 97 and asparagine 164 are each glycosylated (N-linked (GlcNAc...) asparagine). Cysteine 151 and cysteine 165 are joined by a disulfide. 3 helical membrane-spanning segments follow: residues 246–270, 278–299, and 312–333; these read PLFY…VFYL, TSVA…SKRL, and FLLF…VLNI. Residues 334–471 are Cytoplasmic-facing; it reads HFRTPSTHVL…WNRVARTVDR (138 aa). Tyrosine 390 is modified (phosphotyrosine; by Tyr-kinases). A helical membrane pass occupies residues 472–490; the sequence is LCLFVVTPVMVVGTAWIFL.

Belongs to the ligand-gated ion channel (TC 1.A.9) family. Acetylcholine receptor (TC 1.A.9.1) subfamily. Delta/CHRND sub-subfamily. Pentamer of two alpha chains, and one each of the beta, delta, and gamma (in immature muscle) or epsilon (in mature muscle) chains. The muscle heteropentamer composed of alpha-1, beta-1, delta, epsilon subunits interacts with the alpha-conotoxin ImII.

Its subcellular location is the postsynaptic cell membrane. The protein resides in the cell membrane. The catalysed reaction is K(+)(in) = K(+)(out). The enzyme catalyses Na(+)(in) = Na(+)(out). Its function is as follows. After binding acetylcholine, the AChR responds by an extensive change in conformation that affects all subunits and leads to opening of an ion-conducting channel across the plasma membrane. This is Acetylcholine receptor subunit delta from Homo sapiens (Human).